The sequence spans 162 residues: AQPTDQQMDARSFLSEEMIAEFKAAFDMFDTDGGGDISTKELGTVMRMLGQTPTKEELDAIIEEVDEDGSGTIDFEEFLVMMVRQMKEDAQGKSEEELAECFRIFDKNADGYIDSEELGEILRSSGESITDEEIEELMKDGDKNNDGKIDFDEFLKMMEGVQ.

An N-acetylalanine modification is found at Ala1. EF-hand domains are found at residues 17–52 (EMIA…LGQT), 53–88 (PTKE…QMKE), 93–128 (KSEE…SGES), and 129–162 (ITDE…EGVQ). Ca(2+) contacts are provided by Asp30, Asp32, Asp36, Glu41, Asp66, Asp68, Ser70, Thr72, Glu77, Asp106, Asn108, Asp110, Tyr112, Glu117, Asp142, Asn144, Asp146, Lys148, and Glu153.

It belongs to the troponin C family.

Troponin is the central regulatory protein of striated muscle contraction. Tn consists of three components: Tn-I which is the inhibitor of actomyosin ATPase, Tn-T which contains the binding site for tropomyosin and Tn-C. The binding of calcium to Tn-C abolishes the inhibitory action of Tn on actin filaments. The chain is Troponin C, skeletal muscle from Pelophylax lessonae (Pool frog).